A 278-amino-acid chain; its full sequence is HTH-type transcriptional activator RhaS (278 aa).

The HTH araC/xylS-type domain occupies 174 to 272 (NQLMAWLEDH…NWSPRDIRQG (99 aa)). 2 consecutive DNA-binding regions (H-T-H motif) follow at residues 191–212 (EAVA…KQHT) and 239–262 (VTEI…RREF).

Binds DNA as a dimer.

It is found in the cytoplasm. In terms of biological role, activates expression of the rhaBAD and rhaT operons. This chain is HTH-type transcriptional activator RhaS, found in Salmonella agona (strain SL483).